Reading from the N-terminus, the 131-residue chain is uncharacterized protein (131 aa).

Positions 1–19 are cleaved as a signal peptide; sequence MRESLFIIFFQFVCHSSNS. Transmembrane regions (helical) follow at residues 33-53 and 111-131; these read PLLT…ALFF and VSFN…FFLF.

Its subcellular location is the membrane. This is an uncharacterized protein from Saccharomyces cerevisiae (strain ATCC 204508 / S288c) (Baker's yeast).